The sequence spans 119 residues: Large ribosomal subunit protein bL19 (119 aa).

It belongs to the bacterial ribosomal protein bL19 family.

Its function is as follows. This protein is located at the 30S-50S ribosomal subunit interface and may play a role in the structure and function of the aminoacyl-tRNA binding site. In Mycoplasma genitalium (strain ATCC 33530 / DSM 19775 / NCTC 10195 / G37) (Mycoplasmoides genitalium), this protein is Large ribosomal subunit protein bL19 (rplS).